The chain runs to 276 residues: NH(3)-dependent NAD(+) synthetase (276 aa).

Position 43 to 50 (43 to 50 (GISGGVDS)) interacts with ATP. Residue Asp49 coordinates Mg(2+). Position 146 (Arg146) interacts with deamido-NAD(+). An ATP-binding site is contributed by Thr166. A Mg(2+)-binding site is contributed by Glu171. Deamido-NAD(+) is bound by residues Lys179 and Asp186. Lys195 and Thr217 together coordinate ATP. Position 266-267 (266-267 (HK)) interacts with deamido-NAD(+).

Belongs to the NAD synthetase family. As to quaternary structure, homodimer.

It catalyses the reaction deamido-NAD(+) + NH4(+) + ATP = AMP + diphosphate + NAD(+) + H(+). Its pathway is cofactor biosynthesis; NAD(+) biosynthesis; NAD(+) from deamido-NAD(+) (ammonia route): step 1/1. Its function is as follows. Catalyzes the ATP-dependent amidation of deamido-NAD to form NAD. Uses ammonia as a nitrogen source. This is NH(3)-dependent NAD(+) synthetase from Shewanella oneidensis (strain ATCC 700550 / JCM 31522 / CIP 106686 / LMG 19005 / NCIMB 14063 / MR-1).